The following is a 204-amino-acid chain: Inactive ribonuclease-like protein 9 (204 aa).

An N-terminal signal peptide occupies residues 1–26; that stretch reads MMRTPITTHPLLLLLLLQQLLQPVQF. 3 disulfide bridges follow: Cys97-Cys152, Cys115-Cys167, and Cys122-Cys129. Asn130 and Asn142 each carry an N-linked (GlcNAc...) asparagine glycan.

It belongs to the pancreatic ribonuclease family.

It is found in the secreted. Does not exhibit any ribonuclease activity. This Macaca nemestrina (Pig-tailed macaque) protein is Inactive ribonuclease-like protein 9 (RNASE9).